An 800-amino-acid polypeptide reads, in one-letter code: N,N'-diacetylchitobiose phosphorylase (800 aa).

6 residues coordinate N-acetyl-alpha-D-glucosamine 1-phosphate: Arg-333, Arg-343, Arg-349, Asp-350, Trp-490, and Asp-492. The Proton donor role is filled by Asp-492. Residues Asp-492, Lys-636, and Glu-637 each contribute to the N-acetyl-D-glucosamine site. The N-acetyl-alpha-D-glucosamine 1-phosphate site is built by Glu-637, His-644, Gln-690, Thr-709, and Gly-710.

The protein belongs to the glycosyl hydrolase 94 family. As to quaternary structure, homodimer.

It carries out the reaction N,N'-diacetylchitobiose + phosphate = N-acetyl-alpha-D-glucosamine 1-phosphate + N-acetyl-D-glucosamine. Functionally, catalyzes the reversible phosphorolysis of chitobiose (N,N'-diacetylchitobiose or (GlcNAc)(2)) into N-acetyl-alpha-D-glucosamine 1-phosphate (GlcNAc-1-P) and N-acetyl-D-glucosamine (GlcNAc) with inversion of the anomeric configuration. In Vibrio furnissii, this protein is N,N'-diacetylchitobiose phosphorylase.